Here is a 311-residue protein sequence, read N- to C-terminus: Protein MGF 360-16R (311 aa).

Belongs to the asfivirus MGF 360 family.

Plays a role in virus cell tropism, and may be required for efficient virus replication in macrophages. The protein is Protein MGF 360-16R of African swine fever virus (strain Badajoz 1971 Vero-adapted) (Ba71V).